The primary structure comprises 275 residues: Uroplakin-3b (275 aa).

Positions Met1–Ser26 are cleaved as a signal peptide. The Lumenal segment spans residues Leu27–Cys196. Asn77 is a glycosylation site (N-linked (GlcNAc...) asparagine). Residues Met197–Ala217 form a helical membrane-spanning segment. Residues Ala218 to Pro275 are Cytoplasmic-facing.

This sequence belongs to the uroplakin-3 family. Heterodimer with uroplakin-1B (UPK1B). As to expression, expression is urothelium-specific.

The protein resides in the cell membrane. In terms of biological role, component of the asymmetric unit membrane (AUM); a highly specialized biomembrane elaborated by terminally differentiated urothelial cells. May play an important role in AUM-cytoskeleton interaction in terminally differentiated urothelial cells. It also contributes to the formation of urothelial glycocalyx which may play an important role in preventing bacterial adherence. The polypeptide is Uroplakin-3b (Upk3b) (Mus musculus (Mouse)).